The primary structure comprises 182 residues: Thioredoxin F-type, chloroplastic (182 aa).

Residues 1-69 (MALNLCTSPK…SVRSSLETAG (69 aa)) constitute a chloroplast transit peptide. In terms of domain architecture, Thioredoxin spans 70–181 (PTVTVGKVTE…LVAAIDTVRS (112 aa)). Residues C106 and C109 each act as nucleophile in the active site. C106 and C109 are joined by a disulfide.

This sequence belongs to the thioredoxin family. Plant F-type subfamily. Forms a complex with heterodimeric ferredoxin-thioredoxin reductase (FTR) and ferredoxin.

It localises to the plastid. It is found in the chloroplast. Its function is as follows. Participates in various redox reactions through the reversible oxidation of the active center dithiol to a disulfide. The F form is known to activate a number of enzymes of the photosynthetic carbon cycle. The sequence is that of Thioredoxin F-type, chloroplastic from Pisum sativum (Garden pea).